The following is a 560-amino-acid chain: Cytosolic purine 5'-nucleotidase (560 aa).

Aspartate 52 serves as the catalytic Nucleophile. Positions 52 and 54 each coordinate IMP. Residues aspartate 52 and aspartate 54 each coordinate Mg(2+). The Proton donor role is filled by aspartate 54. Residues arginine 144 and asparagine 154 each coordinate ATP. Residues arginine 202, aspartate 206, lysine 215, threonine 249, asparagine 250, serine 251, and lysine 292 each coordinate IMP. Aspartate 351 serves as a coordination point for Mg(2+). Serine 418 carries the post-translational modification Phosphoserine. ATP contacts are provided by glutamine 453 and arginine 456. Serine 502, serine 511, and serine 527 each carry phosphoserine. The interval 541–560 (PQEITHCHDEDDDEEEEEEE) is disordered. The interval 548 to 560 (HDEDDDEEEEEEE) is required for tetramer assembly. A compositionally biased stretch (acidic residues) spans 550 to 560 (EDDDEEEEEEE).

It belongs to the 5'(3')-deoxyribonucleotidase family. Homotetramer. Mg(2+) is required as a cofactor.

The protein localises to the cytoplasm. The protein resides in the cytosol. The enzyme catalyses a ribonucleoside 5'-phosphate + H2O = a ribonucleoside + phosphate. It carries out the reaction a 2'-deoxyribonucleoside + a ribonucleoside 5'-phosphate = a ribonucleoside + a 2'-deoxyribonucleoside 5'-phosphate. It catalyses the reaction IMP + H2O = inosine + phosphate. The catalysed reaction is GMP + H2O = guanosine + phosphate. The enzyme catalyses dIMP + H2O = 2'-deoxyinosine + phosphate. It carries out the reaction dGMP + H2O = 2'-deoxyguanosine + phosphate. It catalyses the reaction XMP + H2O = xanthosine + phosphate. The catalysed reaction is inosine + GMP = guanosine + IMP. The enzyme catalyses dGMP + inosine = 2'-deoxyguanosine + IMP. It carries out the reaction dIMP + inosine = 2'-deoxyinosine + IMP. It catalyses the reaction inosine + UMP = uridine + IMP. The catalysed reaction is inosine + CMP = cytidine + IMP. The enzyme catalyses inosine + AMP = IMP + adenosine. Allosterically activated by various compounds including ATP, 2,3-BPG/2,3-Bisphosphoglyceric acid and Ap4A/P1,P4-bis(5'-adenosyl) tetraphosphate. Binding of an allosteric activator is a prerequisiste to magnesium and substrate binding. Inhibited by inorganic phosphate. In terms of biological role, broad specificity cytosolic 5'-nucleotidase that catalyzes the dephosphorylation of 6-hydroxypurine nucleoside 5'-monophosphates. In addition, possesses a phosphotransferase activity by which it can transfer a phosphate from a donor nucleoside monophosphate to an acceptor nucleoside, preferably inosine, deoxyinosine and guanosine. Has the highest activities for IMP and GMP followed by dIMP, dGMP and XMP. Could also catalyze the transfer of phosphates from pyrimidine monophosphates but with lower efficiency. Through these activities regulates the purine nucleoside/nucleotide pools within the cell. The chain is Cytosolic purine 5'-nucleotidase from Bos taurus (Bovine).